A 309-amino-acid polypeptide reads, in one-letter code: Homoserine kinase (309 aa).

91–101 lines the ATP pocket; sequence PLARGLGSSAA.

This sequence belongs to the GHMP kinase family. Homoserine kinase subfamily.

The protein resides in the cytoplasm. The enzyme catalyses L-homoserine + ATP = O-phospho-L-homoserine + ADP + H(+). Its pathway is amino-acid biosynthesis; L-threonine biosynthesis; L-threonine from L-aspartate: step 4/5. Its function is as follows. Catalyzes the ATP-dependent phosphorylation of L-homoserine to L-homoserine phosphate. This is Homoserine kinase from Bacillus velezensis (strain DSM 23117 / BGSC 10A6 / LMG 26770 / FZB42) (Bacillus amyloliquefaciens subsp. plantarum).